Consider the following 355-residue polypeptide: tRNA pseudouridine synthase D (355 aa).

D84 serves as the catalytic Nucleophile. A TRUD domain is found at 160–306 (GVPNYFGLQR…MAHERRILRL (147 aa)).

It belongs to the pseudouridine synthase TruD family.

It catalyses the reaction uridine(13) in tRNA = pseudouridine(13) in tRNA. Functionally, responsible for synthesis of pseudouridine from uracil-13 in transfer RNAs. The sequence is that of tRNA pseudouridine synthase D from Pseudomonas aeruginosa (strain ATCC 15692 / DSM 22644 / CIP 104116 / JCM 14847 / LMG 12228 / 1C / PRS 101 / PAO1).